A 139-amino-acid chain; its full sequence is MVQREKARDNFEGGCLAELIGSPRDWKCFLAVPDPLLGVQHWLHLWRPQTKDGNSLHRHGDQAWGKHRRQNSLKSPALSGHSIDYHFYPRLRCGMLIGPDKQAVASGLEVLVTSSTKILGQLFPDAAHFLEEASEFKAE.

A disordered region spans residues 54-75 (NSLHRHGDQAWGKHRRQNSLKS).

This is an uncharacterized protein from Homo sapiens (Human).